A 135-amino-acid polypeptide reads, in one-letter code: DNA-directed RNA polymerase subunit omega (135 aa).

The protein belongs to the RNA polymerase subunit omega family. As to quaternary structure, the RNAP catalytic core consists of 2 alpha, 1 beta, 1 beta' and 1 omega subunit. When a sigma factor is associated with the core the holoenzyme is formed, which can initiate transcription.

It carries out the reaction RNA(n) + a ribonucleoside 5'-triphosphate = RNA(n+1) + diphosphate. In terms of biological role, promotes RNA polymerase assembly. Latches the N- and C-terminal regions of the beta' subunit thereby facilitating its interaction with the beta and alpha subunits. In Rhizobium meliloti (strain 1021) (Ensifer meliloti), this protein is DNA-directed RNA polymerase subunit omega.